We begin with the raw amino-acid sequence, 29 residues long: Cyclotide vibi-C (29 aa).

Positions 1-29 form a cross-link, cyclopeptide (Gly-Asn); the sequence is GLPVCGETCAFGSCYTPGCSCSWPVCTRN. Cystine bridges form between Cys-5–Cys-19, Cys-9–Cys-21, and Cys-14–Cys-26.

This is a cyclic peptide.

In terms of biological role, probably participates in a plant defense mechanism. This is Cyclotide vibi-C from Viola biflora (Yellow wood violet).